Consider the following 908-residue polypeptide: Glutamate receptor ionotropic, kainate 2 (908 aa).

The N-terminal stretch at 1–31 is a signal peptide; sequence MQRIAGITKMVTHRRWLGLLLLLLCVGYSHG. Topologically, residues 32-561 are extracellular; it reads MPHVLRFGGI…VFSFLNPLSP (530 aa). N-linked (GlcNAc...) asparagine glycans are attached at residues Asn67, Asn73, Asn275, Asn378, Asn412, Asn423, and Asn430. A disulfide bond links Cys96 and Cys347. Residues Pro516, Ala518, and Arg523 each coordinate L-glutamate. A glycan (N-linked (GlcNAc...) asparagine) is linked at Asn546. A helical transmembrane segment spans residues 562-582; sequence DIWMYILLAYLGVSCVLFVIA. Residues 583-638 lie on the Cytoplasmic side of the membrane; the sequence is RFSPYEWYNPHPCNPDSDVVENNFTLLNSFWFGVGALMQQGSELMPKALSTRIVGG. Residues 639–659 form a helical membrane-spanning segment; that stretch reads IWWFFTLIIISSYTANLAAFL. The Extracellular segment spans residues 660–819; it reads TVERMESPID…KEASALGVQN (160 aa). Residues Ser689, Thr690, and Glu738 each coordinate L-glutamate. A disulfide bridge links Cys750 with Cys804. N-linked (GlcNAc...) asparagine glycosylation is present at Asn751. Residues 820–840 form a helical membrane-spanning segment; it reads IGGIFIVLAAGLVLSVFVAVG. Over 841 to 908 the chain is Cytoplasmic; that stretch reads EFLYKSKQNA…RRLPGKETMA (68 aa).

Belongs to the glutamate-gated ion channel (TC 1.A.10.1) family. GRIK2 subfamily. As to quaternary structure, homotetramer and heterotetramer with GRIK5. Tetramers may be formed by the dimerization of dimers.

The protein localises to the cell membrane. It localises to the postsynaptic cell membrane. It catalyses the reaction Ca(2+)(in) = Ca(2+)(out). The catalysed reaction is Na(+)(in) = Na(+)(out). Cold receptor activity activated by temperatures between 10-19 degrees Celsius. Its function is as follows. Ionotropic glutamate receptor that functions as a cation-permeable ligand-gated ion channel, gated by L-glutamate and the glutamatergic agonist kainic acid. L-glutamate acts as an excitatory neurotransmitter at many synapses in the central nervous system. Binding of the excitatory neurotransmitter L-glutamate induces a conformation change, leading to the opening of the cation channel, and thereby converts the chemical signal to an electrical impulse. The receptor then desensitizes rapidly and enters a transient inactive state, characterized by the presence of bound agonist. In terms of biological role, independent of its ionotropic glutamate receptor activity, acts as a thermoreceptor conferring sensitivity to cold temperatures. Functions in dorsal root ganglion neurons. This Danio rerio (Zebrafish) protein is Glutamate receptor ionotropic, kainate 2.